A 547-amino-acid polypeptide reads, in one-letter code: Chaperonin GroEL (547 aa).

ATP is bound by residues 30–33, Lys-51, 87–91, Gly-416, 480–482, and Asp-496; these read TLGP, DGTTT, and NAA.

It belongs to the chaperonin (HSP60) family. As to quaternary structure, forms a cylinder of 14 subunits composed of two heptameric rings stacked back-to-back. Interacts with the co-chaperonin GroES.

The protein localises to the cytoplasm. It carries out the reaction ATP + H2O + a folded polypeptide = ADP + phosphate + an unfolded polypeptide.. Its function is as follows. Together with its co-chaperonin GroES, plays an essential role in assisting protein folding. The GroEL-GroES system forms a nano-cage that allows encapsulation of the non-native substrate proteins and provides a physical environment optimized to promote and accelerate protein folding. The sequence is that of Chaperonin GroEL from Pseudoalteromonas translucida (strain TAC 125).